Consider the following 553-residue polypeptide: Arginine--tRNA ligase (553 aa).

Positions 130–140 match the 'HIGH' region motif; that stretch reads ANPTGDLHIGH.

Belongs to the class-I aminoacyl-tRNA synthetase family. In terms of assembly, monomer.

The protein resides in the cytoplasm. The catalysed reaction is tRNA(Arg) + L-arginine + ATP = L-arginyl-tRNA(Arg) + AMP + diphosphate. The sequence is that of Arginine--tRNA ligase from Staphylococcus aureus (strain USA300 / TCH1516).